Reading from the N-terminus, the 475-residue chain is Ras-GEF domain-containing family member 1B-B (475 aa).

Positions methionine 1–serine 19 are enriched in polar residues. A disordered region spans residues methionine 1–proline 25. An N-terminal Ras-GEF domain is found at arginine 36–threonine 166. The Ras-GEF domain occupies aspartate 209–proline 456. Residues glutamate 452 to methionine 475 form a disordered region.

Its function is as follows. Guanine nucleotide exchange factor (GEF) for Ras family proteins. In Danio rerio (Zebrafish), this protein is Ras-GEF domain-containing family member 1B-B.